A 159-amino-acid chain; its full sequence is Large ribosomal subunit protein bL17 (159 aa).

Residues 119-138 (PVTPKAKPAKSTAKAAPKSK) show a composition bias toward low complexity. The tract at residues 119 to 159 (PVTPKAKPAKSTAKAAPKSKAPVEETPDEPASEETAEAEAD) is disordered. Positions 143-159 (ETPDEPASEETAEAEAD) are enriched in acidic residues.

Belongs to the bacterial ribosomal protein bL17 family. As to quaternary structure, part of the 50S ribosomal subunit. Contacts protein L32.

The protein is Large ribosomal subunit protein bL17 of Leifsonia xyli subsp. xyli (strain CTCB07).